Reading from the N-terminus, the 185-residue chain is Elongation factor P (185 aa).

It belongs to the elongation factor P family.

It is found in the cytoplasm. The protein operates within protein biosynthesis; polypeptide chain elongation. Its function is as follows. Involved in peptide bond synthesis. Stimulates efficient translation and peptide-bond synthesis on native or reconstituted 70S ribosomes in vitro. Probably functions indirectly by altering the affinity of the ribosome for aminoacyl-tRNA, thus increasing their reactivity as acceptors for peptidyl transferase. The sequence is that of Elongation factor P from Tropheryma whipplei (strain TW08/27) (Whipple's bacillus).